We begin with the raw amino-acid sequence, 201 residues long: IMP cyclohydrolase (201 aa).

The protein belongs to the archaeal IMP cyclohydrolase family.

It carries out the reaction IMP + H2O = 5-formamido-1-(5-phospho-D-ribosyl)imidazole-4-carboxamide. Its pathway is purine metabolism; IMP biosynthesis via de novo pathway; IMP from 5-formamido-1-(5-phospho-D-ribosyl)imidazole-4-carboxamide: step 1/1. Catalyzes the cyclization of 5-formylamidoimidazole-4-carboxamide ribonucleotide to IMP. This Methanococcus maripaludis (strain DSM 14266 / JCM 13030 / NBRC 101832 / S2 / LL) protein is IMP cyclohydrolase.